We begin with the raw amino-acid sequence, 156 residues long: Putative thymidylate kinase (156 aa).

ATP is bound at residue 7–14 (GLDGTGKT).

It belongs to the thymidylate kinase family.

The catalysed reaction is dTMP + ATP = dTDP + ADP. Its pathway is pyrimidine metabolism; dTTP biosynthesis. In terms of biological role, catalyzes the conversion of dTMP to dTDP. The chain is Putative thymidylate kinase from Acidianus convivator (ABV).